A 910-amino-acid polypeptide reads, in one-letter code: Protein translocase subunit SecA (910 aa).

Residues glutamine 89, 107-111 (GEGKT), and aspartate 502 contribute to the ATP site. Positions 889, 891, 900, and 901 each coordinate Zn(2+).

It belongs to the SecA family. In terms of assembly, monomer and homodimer. Part of the essential Sec protein translocation apparatus which comprises SecA, SecYEG and auxiliary proteins SecDF-YajC and YidC. The cofactor is Zn(2+).

The protein resides in the cell inner membrane. The protein localises to the cytoplasm. It catalyses the reaction ATP + H2O + cellular proteinSide 1 = ADP + phosphate + cellular proteinSide 2.. Its function is as follows. Part of the Sec protein translocase complex. Interacts with the SecYEG preprotein conducting channel. Has a central role in coupling the hydrolysis of ATP to the transfer of proteins into and across the cell membrane, serving both as a receptor for the preprotein-SecB complex and as an ATP-driven molecular motor driving the stepwise translocation of polypeptide chains across the membrane. This chain is Protein translocase subunit SecA, found in Bartonella bacilliformis (strain ATCC 35685 / KC583 / Herrer 020/F12,63).